Reading from the N-terminus, the 284-residue chain is MELSFTKMHGTGNDFIMVNGSNYPDLDFSKLARQLCRRHFSIGADGLIIVLPPESVEHDFRMRIFNADGSEAEMCGNGIRCFAHYLRENNLTTRDVLKIETLAGIITPEIVSYNGDKSLIKVNMGRPHFKSEEIPVNIEDELDYVKNFPLKIGNKKLNINCVSMGNPHTIIFVEDVNQIPVSTWGQEIEHNPLFPQKTNVEFIQIQSEDEIIMRVWERGSGITLACGTGACASVVAGIKNGLLKNMVTVHLPGGDLNIEWQEQDVFMTGPAESVYTGKIVIQEG.

Substrate-binding residues include Asn-13 and Asn-66. Cys-75 (proton donor) is an active-site residue. Residues 76–77, Asn-166, Asn-199, and 217–218 contribute to the substrate site; these read GN and ER. Cys-226 (proton acceptor) is an active-site residue. 227–228 is a binding site for substrate; the sequence is GT.

This sequence belongs to the diaminopimelate epimerase family. Homodimer.

It localises to the cytoplasm. The enzyme catalyses (2S,6S)-2,6-diaminopimelate = meso-2,6-diaminopimelate. The protein operates within amino-acid biosynthesis; L-lysine biosynthesis via DAP pathway; DL-2,6-diaminopimelate from LL-2,6-diaminopimelate: step 1/1. In terms of biological role, catalyzes the stereoinversion of LL-2,6-diaminopimelate (L,L-DAP) to meso-diaminopimelate (meso-DAP), a precursor of L-lysine and an essential component of the bacterial peptidoglycan. The chain is Diaminopimelate epimerase from Halothermothrix orenii (strain H 168 / OCM 544 / DSM 9562).